Here is a 132-residue protein sequence, read N- to C-terminus: UPF0212 protein PYRAB08340 (132 aa).

This sequence belongs to the UPF0212 family.

This chain is UPF0212 protein PYRAB08340, found in Pyrococcus abyssi (strain GE5 / Orsay).